The chain runs to 469 residues: Neuraminidase (469 aa).

The Intravirion segment spans residues 1–6 (MNPNQK). Residues 7–29 (IITIGSVSLTIATICFLMQIAIQ) traverse the membrane as a helical segment. The segment at 11 to 33 (GSVSLTIATICFLMQIAIQVTTV) is involved in apical transport and lipid raft association. The Virion surface segment spans residues 30–469 (VTTVTLHFKQ…DGADINLMPI (440 aa)). The interval 36-88 (HFKQYECDSPANNQVMPCEPIIIERNITEIVYLTNTTIEKEICPKLVEYRNWS) is hypervariable stalk region. Residues N61, N70, and N86 are each glycosylated (N-linked (GlcNAc...) asparagine; by host). The segment at 91–469 (QCKITGFAPF…DGADINLMPI (379 aa)) is head of neuraminidase. Disulfide bonds link C92–C417, C124–C129, C183–C230, C232–C237, C278–C291, C280–C289, C318–C337, and C421–C447. R118 contacts substrate. The N-linked (GlcNAc...) asparagine; by host glycan is linked to N146. The active-site Proton donor/acceptor is the D151. R152 serves as a coordination point for substrate. N200 and N234 each carry an N-linked (GlcNAc...) asparagine; by host glycan. 276-277 (EE) is a substrate binding site. R292 serves as a coordination point for substrate. 3 residues coordinate Ca(2+): D293, G297, and D324. Residue R371 participates in substrate binding. The N-linked (GlcNAc...) asparagine; by host glycan is linked to N402. Y406 (nucleophile) is an active-site residue.

Belongs to the glycosyl hydrolase 34 family. In terms of assembly, homotetramer. It depends on Ca(2+) as a cofactor. Post-translationally, N-glycosylated.

The protein resides in the virion membrane. Its subcellular location is the host apical cell membrane. It carries out the reaction Hydrolysis of alpha-(2-&gt;3)-, alpha-(2-&gt;6)-, alpha-(2-&gt;8)- glycosidic linkages of terminal sialic acid residues in oligosaccharides, glycoproteins, glycolipids, colominic acid and synthetic substrates.. Its activity is regulated as follows. Inhibited by the neuraminidase inhibitors zanamivir (Relenza) and oseltamivir (Tamiflu). These drugs interfere with the release of progeny virus from infected cells and are effective against all influenza strains. Resistance to neuraminidase inhibitors is quite rare. Catalyzes the removal of terminal sialic acid residues from viral and cellular glycoconjugates. Cleaves off the terminal sialic acids on the glycosylated HA during virus budding to facilitate virus release. Additionally helps virus spread through the circulation by further removing sialic acids from the cell surface. These cleavages prevent self-aggregation and ensure the efficient spread of the progeny virus from cell to cell. Otherwise, infection would be limited to one round of replication. Described as a receptor-destroying enzyme because it cleaves a terminal sialic acid from the cellular receptors. May facilitate viral invasion of the upper airways by cleaving the sialic acid moieties on the mucin of the airway epithelial cells. Likely to plays a role in the budding process through its association with lipid rafts during intracellular transport. May additionally display a raft-association independent effect on budding. Plays a role in the determination of host range restriction on replication and virulence. Sialidase activity in late endosome/lysosome traffic seems to enhance virus replication. The chain is Neuraminidase from Aves (whales).